The following is a 235-amino-acid chain: Glial cell line-derived neurotrophic factor (235 aa).

The signal sequence occupies residues 1 to 19 (MKLWDILATCLLLLSSVST). A propeptide spanning residues 20–87 (RPLFHKLQPS…DFIEATLGRL (68 aa)) is cleaved from the precursor. Disordered stretches follow at residues 34-60 (VRSE…ASME) and 91-137 (SDVE…RVKG). The span at 119-128 (GERKRSRGRA) shows a compositional bias: basic residues. Disulfide bonds link C142–C203, C169–C232, and C173–C234. N150 and N186 each carry an N-linked (GlcNAc...) asparagine glycan.

It belongs to the TGF-beta family. GDNF subfamily. Homodimer; disulfide-linked. Interacts with GFRA1 coreceptor and RET: forms a 2:2:2 ternary complex composed of GDNF ligand, GFRA1 and RET receptor. In terms of tissue distribution, first expressed at 14 hours post-fertilization (hpf) in the ventral half of anterior somites and in intermediate mesoderm. Ventral somitic expression persists and extends more posteriorly over the next 12 hours. Expressed throughout the ventral trunk mesoderm and endoderm at 24 hpf. By 30 hpf, somitic expression ceases and by 36 hpf, expression becomes restricted to the endodermal cells forming the gut, with expression along the whole length of the developing gut tube at 72 hpf.

The protein localises to the secreted. In terms of biological role, neurotrophic factor that enhances survival and morphological differentiation of dopaminergic neurons and increases their high-affinity dopamine uptake. Acts by binding to its coreceptor, GFRA1, leading to autophosphorylation and activation of the RET receptor. This is Glial cell line-derived neurotrophic factor from Danio rerio (Zebrafish).